The following is a 957-amino-acid chain: Glycine dehydrogenase (decarboxylating) (957 aa).

Lys-708 carries the N6-(pyridoxal phosphate)lysine modification.

The protein belongs to the GcvP family. In terms of assembly, the glycine cleavage system is composed of four proteins: P, T, L and H. It depends on pyridoxal 5'-phosphate as a cofactor.

It carries out the reaction N(6)-[(R)-lipoyl]-L-lysyl-[glycine-cleavage complex H protein] + glycine + H(+) = N(6)-[(R)-S(8)-aminomethyldihydrolipoyl]-L-lysyl-[glycine-cleavage complex H protein] + CO2. The glycine cleavage system catalyzes the degradation of glycine. The P protein binds the alpha-amino group of glycine through its pyridoxal phosphate cofactor; CO(2) is released and the remaining methylamine moiety is then transferred to the lipoamide cofactor of the H protein. This chain is Glycine dehydrogenase (decarboxylating), found in Shigella boydii serotype 4 (strain Sb227).